Here is a 137-residue protein sequence, read N- to C-terminus: Large ribosomal subunit protein uL16 (137 aa).

This sequence belongs to the universal ribosomal protein uL16 family. Part of the 50S ribosomal subunit.

Functionally, binds 23S rRNA and is also seen to make contacts with the A and possibly P site tRNAs. The polypeptide is Large ribosomal subunit protein uL16 (Streptococcus pyogenes serotype M1).